A 414-amino-acid polypeptide reads, in one-letter code: Esterase FrsA (414 aa).

This sequence belongs to the FrsA family.

The catalysed reaction is a carboxylic ester + H2O = an alcohol + a carboxylate + H(+). Its function is as follows. Catalyzes the hydrolysis of esters. The polypeptide is Esterase FrsA (Escherichia coli O157:H7).